The primary structure comprises 246 residues: MRYKIVIEYDGSDFIGWQKQNHNSNSIQEILEKAIFKFSKQHVIVYGAGRTDAGVHALGQVAHFDLTTDFETYIVRNAINYHLISHAIAVVHVEKTDTDFHARFSAKRRYYLYKIVNRYSPLTIDRNRAWLVHTPLNVENMIKAVCYIKGNHNFSSFRAKCCQSKSPIKTVDNLSITYNHPYIDINISAISFLHHQVRIIVGTLVECGKGYFPPEHIKTIMEANNRSYAGTTAPSYGLYFVKVDYS.

Residue Asp52 is the Nucleophile of the active site. Tyr111 is a substrate binding site.

It belongs to the tRNA pseudouridine synthase TruA family. As to quaternary structure, homodimer.

It carries out the reaction uridine(38/39/40) in tRNA = pseudouridine(38/39/40) in tRNA. Functionally, formation of pseudouridine at positions 38, 39 and 40 in the anticodon stem and loop of transfer RNAs. The polypeptide is tRNA pseudouridine synthase A (Ehrlichia ruminantium (strain Welgevonden)).